Reading from the N-terminus, the 1035-residue chain is Glycine dehydrogenase (decarboxylating), mitochondrial (1035 aa).

Residues 1-64 (MERARKLANR…KSFNTQQARS (64 aa)) constitute a mitochondrion transit peptide. Lys771 carries the N6-(pyridoxal phosphate)lysine modification.

Belongs to the GcvP family. As to quaternary structure, homodimer. The glycine cleavage system is composed of four proteins: P, T, L and H. It depends on pyridoxal 5'-phosphate as a cofactor.

The protein resides in the mitochondrion. The catalysed reaction is N(6)-[(R)-lipoyl]-L-lysyl-[glycine-cleavage complex H protein] + glycine + H(+) = N(6)-[(R)-S(8)-aminomethyldihydrolipoyl]-L-lysyl-[glycine-cleavage complex H protein] + CO2. Functionally, the glycine cleavage system catalyzes the degradation of glycine. The P protein binds the alpha-amino group of glycine through its pyridoxal phosphate cofactor; CO(2) is released and the remaining methylamine moiety is then transferred to the lipoamide cofactor of the H protein. This Solanum tuberosum (Potato) protein is Glycine dehydrogenase (decarboxylating), mitochondrial (GDCSP).